A 147-amino-acid chain; its full sequence is uncharacterized protein (147 aa).

This is an uncharacterized protein from Caenorhabditis elegans.